The primary structure comprises 390 residues: uncharacterized protein (390 aa).

Transmembrane regions (helical) follow at residues 4–24 (IWLFFSVMFVIGTDTFLLSPL), 40–60 (GWMVSAYALGYALFAFIAGPI), 68–88 (TVMLWGLAGFIVSTFLCGIAP), 98–118 (FAAGVSAAFVTPQIWASIPVI), 130–150 (IATAGLAASQMLGLPIGGFLA), 159–179 (FVLSACSLILLLILAAVMPGI), 205–225 (VILLAYFLFQTGNFASFSFLG), 236–256 (VSQIGAAMLVLGLGNMLGSLI), 273–293 (GMLLMGALYFALPFFPNLFLV), 295–315 (AGFFLTFFTAGIIFPLMMGVF), 329–349 (LSNAAMYAGTTVGTSIAGFLY), and 356–376 (GAVTGFTAILFILSMTLYQTI).

This sequence belongs to the major facilitator superfamily.

It localises to the cell membrane. This is an uncharacterized protein from Bacillus subtilis (strain 168).